Here is a 383-residue protein sequence, read N- to C-terminus: MELEIITEGRTPLKVPKTRGQPSARDPVFYNPAMQLSRDLTVSSLVQYGPKIVCDPLAGVGARGIRIAVELSPEVVVLNDLNPRAVELIEENVRLNDVEDVCRIENRDANALMHEDELAGRFDYVDIDPFGPPVPFLDAAVRTVRNRGVVGISATDVSALAGRYPRSARRKYWVEVERVEFYQEVAIRALISYIVRTCAKYDLAFEPHIAFFQRHHVRVIGEIRRGARRADRALKRLGYLLHCRECGYTSEREFDRECPRCGSGSVVRLGPLWLPDFADRERAERAASDARELGLEEAAELLETVAKETGTNPWAYDIHRWASRLGLSRVPSLTSVLEGLREEGFNAVRPHYSKRAVVKTDASPEEFEAVLTEVAGDSGCLHR.

Residues 4-371 (EIITEGRTPL…ASPEEFEAVL (368 aa)) form the Trm1 methyltransferase domain. Positions 38, 63, 80, 108, and 109 each coordinate S-adenosyl-L-methionine. Zn(2+)-binding residues include cysteine 243, cysteine 246, cysteine 258, and cysteine 261.

The protein belongs to the class I-like SAM-binding methyltransferase superfamily. Trm1 family.

The enzyme catalyses guanosine(26) in tRNA + 2 S-adenosyl-L-methionine = N(2)-dimethylguanosine(26) in tRNA + 2 S-adenosyl-L-homocysteine + 2 H(+). In terms of biological role, dimethylates a single guanine residue at position 26 of a number of tRNAs using S-adenosyl-L-methionine as donor of the methyl groups. The protein is tRNA (guanine(26)-N(2))-dimethyltransferase of Methanopyrus kandleri (strain AV19 / DSM 6324 / JCM 9639 / NBRC 100938).